The primary structure comprises 260 residues: NAD-dependent protein deacetylase (260 aa).

The region spanning 9–260 is the Deacetylase sirtuin-type domain; the sequence is DDIDGETLDA…QVLPAIVERL (252 aa). The NAD(+) site is built by Ala-35, Thr-39, Phe-46, Arg-47, Gln-114, Ile-116, Asp-117, and His-132. Phe-46 serves as a coordination point for nicotinamide. Nicotinamide-binding residues include Ile-116 and Asp-117. His-132 serves as the catalytic Proton acceptor. Cys-140, Cys-143, Cys-166, and Cys-168 together coordinate Zn(2+). Residues Ser-206, Ser-207, Asn-231, Asp-248, and Val-249 each coordinate NAD(+).

The protein belongs to the sirtuin family. Class U subfamily. It depends on Zn(2+) as a cofactor.

It is found in the cytoplasm. It carries out the reaction N(6)-acetyl-L-lysyl-[protein] + NAD(+) + H2O = 2''-O-acetyl-ADP-D-ribose + nicotinamide + L-lysyl-[protein]. Functionally, NAD-dependent protein deacetylase which modulates the activities of several enzymes which are inactive in their acetylated form. Deacetylates the N-terminal lysine residue of Alba, the major archaeal chromatin protein and that, in turn, increases Alba's DNA binding affinity, thereby repressing transcription. The polypeptide is NAD-dependent protein deacetylase (Haloarcula marismortui (strain ATCC 43049 / DSM 3752 / JCM 8966 / VKM B-1809) (Halobacterium marismortui)).